The primary structure comprises 375 residues: MKVKVLSLLVPALLVAGAANAAEVYNKDGNKLDLYGKVDGLHYFSDDKSVDGDQTYMRLGFKGETQVTDQLTGYGQWEYQIQGNAPESENNSWTRVAFAGLKFQDIGSFDYGRNYGVVYDVTSWTDVLPEFGGDTYGSDNFMQQRGNGFATYRNTDFFGLVDGLNFAVQYQGQNGSVSGENDPDFTGHGITNNGRKALRQNGDGVGGSITYDYEGFGVGAAVSSSKRTWDQNNTGLIGTGDRAETYTGGLKYDANNIYLAAQYTQTYNATRVGSLGWANKAQNFEAVAQYQFDFGLRPSVAYLQSKGKNLGVVAGRNYDDEDILKYVDVGATYYFNKNMSTYVDYKINLLDDNQFTRAAGINTDDIVALGLVYQF.

A signal peptide spans 1–21; it reads MKVKVLSLLVPALLVAGAANA. The beta stranded transmembrane segment at 22-27 threads the bilayer; sequence AEVYNK. The Periplasmic portion of the chain corresponds to 28–29; it reads DG. Residues 30 to 44 form a beta stranded membrane-spanning segment; it reads NKLDLYGKVDGLHYF. Residues 45–50 lie on the Extracellular side of the membrane; the sequence is SDDKSV. A beta stranded membrane pass occupies residues 51-66; the sequence is DGDQTYMRLGFKGETQ. Residues 67-70 lie on the Periplasmic side of the membrane; the sequence is VTDQ. A beta stranded transmembrane segment spans residues 71–82; sequence LTGYGQWEYQIQ. The Extracellular segment spans residues 83–91; sequence GNAPESENN. A beta stranded transmembrane segment spans residues 92 to 103; it reads SWTRVAFAGLKF. The Periplasmic segment spans residues 104–105; sequence QD. Residues 106 to 113 traverse the membrane as a beta stranded segment; that stretch reads IGSFDYGR. The Extracellular portion of the chain corresponds to 114–146; the sequence is NYGVVYDVTSWTDVLPEFGGDTYGSDNFMQQRG. The chain crosses the membrane as a beta stranded span at residues 147–156; sequence NGFATYRNTD. Residues 157–163 lie on the Periplasmic side of the membrane; sequence FFGLVDG. The beta stranded transmembrane segment at 164 to 172 threads the bilayer; sequence LNFAVQYQG. Over 173–201 the chain is Extracellular; sequence QNGSVSGENDPDFTGHGITNNGRKALRQN. A beta stranded membrane pass occupies residues 202–212; it reads GDGVGGSITYD. Over 213–215 the chain is Periplasmic; that stretch reads YEG. Residues 216–226 traverse the membrane as a beta stranded segment; that stretch reads FGVGAAVSSSK. At 227-241 the chain is on the extracellular side; it reads RTWDQNNTGLIGTGD. A beta stranded transmembrane segment spans residues 242 to 254; that stretch reads RAETYTGGLKYDA. The Periplasmic segment spans residues 255-256; that stretch reads NN. The beta stranded transmembrane segment at 257–267 threads the bilayer; it reads IYLAAQYTQTY. Residues 268–279 lie on the Extracellular side of the membrane; sequence NATRVGSLGWAN. The beta stranded transmembrane segment at 280-292 threads the bilayer; sequence KAQNFEAVAQYQF. Topologically, residues 293–294 are periplasmic; the sequence is DF. Residues 295–309 form a beta stranded membrane-spanning segment; the sequence is GLRPSVAYLQSKGKN. At 310 to 320 the chain is on the extracellular side; it reads LGVVAGRNYDD. Residues 321–335 form a beta stranded membrane-spanning segment; that stretch reads EDILKYVDVGATYYF. Residues 336–338 are Periplasmic-facing; sequence NKN. The chain crosses the membrane as a beta stranded span at residues 339–348; sequence MSTYVDYKIN. Topologically, residues 349–364 are extracellular; the sequence is LLDDNQFTRAAGINTD. The beta stranded transmembrane segment at 365–375 threads the bilayer; the sequence is DIVALGLVYQF.

Belongs to the Gram-negative porin family. Homotrimer. Forms mixed heterotrimers with OmpF; other mixed heterotrimers are also probable. The N- and C-termini are two parts of the same strand. Extracellular loop 3 folds back into the lumen of the barrel forming a constriction zone that controls the pore size, while the trimer interface is formed by the packing of hydrophobic residues on the outer edges of beta strands 1 to 5 and further stabilized by extracellular loop 2 which reaches into the neighboring monomer.

The protein localises to the cell outer membrane. In terms of biological role, forms pores that allow passive diffusion of small molecules across the outer membrane, including some antibiotics. Variation of the residues in the constriction zone modifies the transverse electric field in the zone, altering antibiotic resistance. Functionally, (Microbial infection) Is not susceptible to CdiA-EC536-mediated toxicity, which uses OmpC-OmpF heterotrimers of some strains as its outer membrane receptor. Mutagenesis of extracellular loops L4 or L5 of this protein confers susceptibility to the toxin. This chain is Outer membrane porin C (ompC), found in Escherichia coli O6:H1 (strain CFT073 / ATCC 700928 / UPEC).